A 1689-amino-acid chain; its full sequence is DNA-directed RNA polymerase I subunit rpa1 (1689 aa).

Positions 63, 66, 73, and 76 each coordinate Zn(2+). Phosphoserine occurs at positions 159 and 161. The segment covering 269 to 280 has biased composition (basic and acidic residues); the sequence is VLRDTSKKHHED. Residues 269-295 form a disordered region; the sequence is VLRDTSKKHHEDEGYDGDSDSSNESEV. The span at 281–295 shows a compositional bias: acidic residues; that stretch reads EGYDGDSDSSNESEV. Mg(2+) contacts are provided by D643, D645, and D647. Positions 1005–1017 are bridging helix; the sequence is PQEYYFHCMAGRE. Positions 1346–1440 are disordered; the sequence is RKSGGKDDTV…EEDEGFKSDE (95 aa). 2 positions are modified to phosphoserine: S1438 and S1441.

It belongs to the RNA polymerase beta' chain family. As to quaternary structure, component of the RNA polymerase I (Pol I) complex consisting of at least 13 subunits.

The protein resides in the nucleus. It localises to the nucleolus. The enzyme catalyses RNA(n) + a ribonucleoside 5'-triphosphate = RNA(n+1) + diphosphate. DNA-dependent RNA polymerase catalyzes the transcription of DNA into RNA using the four ribonucleoside triphosphates as substrates. Largest and catalytic core component of RNA polymerase I which synthesizes ribosomal RNA precursors. Forms the polymerase active center together with the second largest subunit. A single stranded DNA template strand of the promoter is positioned within the central active site cleft of Pol I. A bridging helix emanates from RPA1 and crosses the cleft near the catalytic site and is thought to promote translocation of Pol I by acting as a ratchet that moves the RNA-DNA hybrid through the active site by switching from straight to bent conformations at each step of nucleotide addition. In Schizosaccharomyces pombe (strain 972 / ATCC 24843) (Fission yeast), this protein is DNA-directed RNA polymerase I subunit rpa1 (rpa1).